The primary structure comprises 1060 residues: Protocadherin-1 (1060 aa).

The N-terminal stretch at 1–57 (MDSGAGGRRCPEAALLILGPPRMEHLRHSPGPGGQRLLLPSMLLALLLLLAPSPGHA) is a signal peptide. Cadherin domains lie at 58–168 (TRVV…TPNF), 169–280 (ASPV…APKF), 281–387 (ERPS…APTI), 396–506 (THQD…APVF), 507–612 (TQSV…DPKF), 613–715 (MLSG…APYI), and 718–844 (PSNT…DPEY). Residues 58-852 (TRVVYKVPEE…EYERSKQRGN (795 aa)) are Extracellular-facing. 2 N-linked (GlcNAc...) asparagine glycosylation sites follow: Asn305 and Asn403. Asn618, Asn662, Asn813, and Asn818 each carry an N-linked (GlcNAc...) asparagine glycan. The helical transmembrane segment at 853-873 (ILFGVVAGVVAVALLIALAVL) threads the bilayer. Residues 874 to 1060 (VRYCRQREAK…HGAIWTEVWE (187 aa)) lie on the Cytoplasmic side of the membrane. Basic and acidic residues predominate over residues 884–897 (SGYQAGKKETKDLY). The interval 884–1045 (SGYQAGKKET…QPFQLSTPQP (162 aa)) is disordered. A compositionally biased stretch (basic residues) spans 907–920 (KGNKSKGKKSKSPK). Phosphoserine is present on residues Ser918, Ser949, Ser962, and Ser984. Positions 973–986 (SPLPSIQLQPQSPS) are enriched in low complexity. 2 stretches are compositionally biased toward polar residues: residues 1003 to 1024 (FVGTGDTTSTGSEQYSDYSYRT) and 1033 to 1043 (QVGQPFQLSTP).

Highly expressed in the brain and neuro-glial cells.

It is found in the cell junction. Its subcellular location is the cell membrane. May be involved in cell-cell interaction processes and in cell adhesion. The chain is Protocadherin-1 (PCDH1) from Homo sapiens (Human).